A 248-amino-acid chain; its full sequence is Aquaporin TIP2-3 (248 aa).

A run of 2 helical transmembrane segments spans residues 20–40 (AYVA…GSAI) and 54–74 (AGLV…VSMA). The short motif at 83 to 85 (NPA) is the NPA 1 element. The next 3 helical transmembrane spans lie at 97–119 (TILT…CFLL), 141–161 (GVVM…ATAA), and 168–188 (LGTI…LAAG). The NPA 2 motif lies at 196–198 (NPA). The chain crosses the membrane as a helical span at residues 217–237 (WVGPLVGGGLAGLVYGDVFIA).

The protein belongs to the MIP/aquaporin (TC 1.A.8) family. TIP (TC 1.A.8.10) subfamily. As to expression, specifically expressed in roots.

The protein localises to the cell membrane. In terms of biological role, water channel required to facilitate the transport of water across cell membrane. The polypeptide is Aquaporin TIP2-3 (TIP2-3) (Zea mays (Maize)).